The primary structure comprises 165 residues: Glucosamine 6-phosphate N-acetyltransferase 1 (165 aa).

Residues 22 to 165 (YRIRPLELAD…EKNVQMGLYF (144 aa)) form the N-acetyltransferase domain. Substrate is bound by residues Ser44, 92-95 (KFIR), and 104-106 (EDV). 114–119 (GRGLGE) contributes to the acetyl-CoA binding site. 135 to 136 (YK) serves as a coordination point for substrate. Position 149–151 (149–151 (YAK)) interacts with acetyl-CoA.

Belongs to the acetyltransferase family. GNA1 subfamily. As to quaternary structure, homodimer. As to expression, highly expressed in the root elongation zone and at lower levels in leaves and grains.

It localises to the endoplasmic reticulum membrane. It carries out the reaction D-glucosamine 6-phosphate + acetyl-CoA = N-acetyl-D-glucosamine 6-phosphate + CoA + H(+). It functions in the pathway nucleotide-sugar biosynthesis; UDP-N-acetyl-alpha-D-glucosamine biosynthesis; N-acetyl-alpha-D-glucosamine 1-phosphate from alpha-D-glucosamine 6-phosphate (route I): step 1/2. Acetyltransferase involved in de novo biosynthesis of UDP-N-acetylglucosamine (UDP-GlcNAc) in roots and is required for maintaining normal root cell shape. UDP-GlcNAc is an essential metabolite that serves as an initial sugar donor for N-glycan synthesis and thus plays an important role in protein and lipid glycosylation. This is Glucosamine 6-phosphate N-acetyltransferase 1 (GNA1) from Oryza sativa subsp. japonica (Rice).